A 1283-amino-acid chain; its full sequence is 5-oxoprolinase PfmaA (1283 aa).

The segment at 1256–1283 (NTPGGGAWGKPEGDADGYREEDQAGDGI) is disordered. A compositionally biased stretch (basic and acidic residues) spans 1266-1277 (PEGDADGYREED).

It belongs to the oxoprolinase family. Homodimer.

The enzyme catalyses 5-oxo-L-proline + ATP + 2 H2O = L-glutamate + ADP + phosphate + H(+). Functionally, 5-oxoprolinase; part of the gene cluster that mediates the biosynthesis of dihydroxynaphthalene (DHN)-melanin, a bluish-green pigment forming a dark layer in the conidial wall that protects the conidia from UV radiations. The first step of the pathway is the production of the pentaketide 1,3,6,8-tetrahydroxynaphthalene (1,3,6,8-THN or T4HN) by the polyketide synthase PfmaE though condensation of acetyl-CoA with malonyl-CoA. T4HN is not stable and easily oxidizes into the stable form flaviolin. T4HN is also substrate of the hydroxynaphthalene reductase PfmaG to yield scytalone. The scytalone dehydratase PfmaJ then reduces scytalone to 1,3,8-THN. 1,3,8-THN is then substrate of the hydroxynaphthalene reductase PfmaI to yield vermelone. Vermelone is further converted by the multicopper oxidase PfmaD to 1,8-DHN. Finally the laccase PFICI_06862 transforms 1,8-DHN to DHN-melanin. The roles of the 5-oxoprolinase PfmaA and the proline iminopeptidase PfmaB within the cluster have not been elucidated yet. The sequence is that of 5-oxoprolinase PfmaA from Pestalotiopsis fici (strain W106-1 / CGMCC3.15140).